A 585-amino-acid chain; its full sequence is tRNA 5-methylaminomethyl-2-thiouridine biosynthesis bifunctional protein MnmC (585 aa).

The tract at residues 1-236 (MTPDGLYCDP…KRERLEAVWP (236 aa)) is tRNA (mnm(5)s(2)U34)-methyltransferase. Positions 254–585 (LGAGIAGASL…SRRAGQGAAG (332 aa)) are FAD-dependent cmnm(5)s(2)U34 oxidoreductase. The interval 564–585 (EAMAPGRFAERRSRRAGQGAAG) is disordered.

This sequence in the N-terminal section; belongs to the methyltransferase superfamily. tRNA (mnm(5)s(2)U34)-methyltransferase family. The protein in the C-terminal section; belongs to the DAO family. It depends on FAD as a cofactor.

It is found in the cytoplasm. It carries out the reaction 5-aminomethyl-2-thiouridine(34) in tRNA + S-adenosyl-L-methionine = 5-methylaminomethyl-2-thiouridine(34) in tRNA + S-adenosyl-L-homocysteine + H(+). In terms of biological role, catalyzes the last two steps in the biosynthesis of 5-methylaminomethyl-2-thiouridine (mnm(5)s(2)U) at the wobble position (U34) in tRNA. Catalyzes the FAD-dependent demodification of cmnm(5)s(2)U34 to nm(5)s(2)U34, followed by the transfer of a methyl group from S-adenosyl-L-methionine to nm(5)s(2)U34, to form mnm(5)s(2)U34. The protein is tRNA 5-methylaminomethyl-2-thiouridine biosynthesis bifunctional protein MnmC of Maricaulis maris (strain MCS10) (Caulobacter maris).